A 187-amino-acid chain; its full sequence is Large ribosomal subunit protein uL22B (187 aa).

This sequence belongs to the universal ribosomal protein uL22 family. In terms of assembly, component of the large ribosomal subunit (LSU). Mature yeast ribosomes consist of a small (40S) and a large (60S) subunit. The 40S small subunit contains 1 molecule of ribosomal RNA (18S rRNA) and at least 33 different proteins. The large 60S subunit contains 3 rRNA molecules (25S, 5.8S and 5S rRNA) and at least 46 different proteins. uL22 is associated with the polypeptide exit tunnel.

The protein resides in the cytoplasm. In terms of biological role, component of the ribosome, a large ribonucleoprotein complex responsible for the synthesis of proteins in the cell. The small ribosomal subunit (SSU) binds messenger RNAs (mRNAs) and translates the encoded message by selecting cognate aminoacyl-transfer RNA (tRNA) molecules. The large subunit (LSU) contains the ribosomal catalytic site termed the peptidyl transferase center (PTC), which catalyzes the formation of peptide bonds, thereby polymerizing the amino acids delivered by tRNAs into a polypeptide chain. The nascent polypeptides leave the ribosome through a tunnel in the LSU and interact with protein factors that function in enzymatic processing, targeting, and the membrane insertion of nascent chains at the exit of the ribosomal tunnel. The protein is Large ribosomal subunit protein uL22B (rpl1702) of Schizosaccharomyces pombe (strain 972 / ATCC 24843) (Fission yeast).